The chain runs to 96 residues: MEQAPEDQGPQREPYNEWTIEILEELKREAVRHFPRPWLHDLGQHIYNNYGDTWEGVEAIIRILQQLLFIHFRIGCHHSRIGILRQRRGGNGASRS.

A homooligomerization region spans residues 1–42; it reads MEQAPEDQGPQREPYNEWTIEILEELKREAVRHFPRPWLHDL. 3 positions are modified to phosphoserine; by host: Ser79, Ser94, and Ser96.

Belongs to the HIV-1 VPR protein family. As to quaternary structure, homooligomer, may form homodimer. Interacts with p6-gag region of the Pr55 Gag precursor protein through a (Leu-X-X)4 motif near the C-terminus of the P6gag protein. Interacts with host UNG. May interact with host RAD23A/HHR23A. Interacts with host VPRBP/DCAF1, leading to hijack the CUL4A-RBX1-DDB1-DCAF1/VPRBP complex, mediating ubiquitination of host proteins such as TERT and ZGPAT and arrest of the cell cycle in G2 phase. Phosphorylated on several residues by host. These phosphorylations regulate VPR activity for the nuclear import of the HIV-1 pre-integration complex.

Its subcellular location is the virion. The protein resides in the host nucleus. It is found in the host extracellular space. In terms of biological role, during virus replication, may deplete host UNG protein, and incude G2-M cell cycle arrest. Acts by targeting specific host proteins for degradation by the 26S proteasome, through association with the cellular CUL4A-DDB1 E3 ligase complex by direct interaction with host VPRPB/DCAF-1. Cell cycle arrest reportedly occurs within hours of infection and is not blocked by antiviral agents, suggesting that it is initiated by the VPR carried into the virion. Additionally, VPR induces apoptosis in a cell cycle dependent manner suggesting that these two effects are mechanistically linked. Detected in the serum and cerebrospinal fluid of AIDS patient, VPR may also induce cell death to bystander cells. Functionally, during virus entry, plays a role in the transport of the viral pre-integration (PIC) complex to the host nucleus. This function is crucial for viral infection of non-dividing macrophages. May act directly at the nuclear pore complex, by binding nucleoporins phenylalanine-glycine (FG)-repeat regions. The chain is Protein Vpr from Human immunodeficiency virus type 1 group M subtype K (isolate 97ZR-EQTB11) (HIV-1).